The following is a 169-amino-acid chain: N5-carboxyaminoimidazole ribonucleotide mutase (169 aa).

The substrate site is built by Ser16, Asp19, and Arg46.

This sequence belongs to the AIR carboxylase family. Class I subfamily.

The catalysed reaction is 5-carboxyamino-1-(5-phospho-D-ribosyl)imidazole + H(+) = 5-amino-1-(5-phospho-D-ribosyl)imidazole-4-carboxylate. The protein operates within purine metabolism; IMP biosynthesis via de novo pathway; 5-amino-1-(5-phospho-D-ribosyl)imidazole-4-carboxylate from 5-amino-1-(5-phospho-D-ribosyl)imidazole (N5-CAIR route): step 2/2. Catalyzes the conversion of N5-carboxyaminoimidazole ribonucleotide (N5-CAIR) to 4-carboxy-5-aminoimidazole ribonucleotide (CAIR). This chain is N5-carboxyaminoimidazole ribonucleotide mutase, found in Escherichia coli O157:H7.